Reading from the N-terminus, the 20-residue chain is 39 kDa major outer membrane protein (20 aa).

It localises to the cell outer membrane. The polypeptide is 39 kDa major outer membrane protein (Aggregatibacter actinomycetemcomitans (Actinobacillus actinomycetemcomitans)).